A 316-amino-acid chain; its full sequence is D-alanine--D-alanine ligase (316 aa).

Residues 107 to 303 (KEVFAARGLT…FEDLVERILI (197 aa)) enclose the ATP-grasp domain. 133–188 (AEGFGYPVVVKPSQEGSSVGVSIVKSPEELPSALELAFRYDDDILVERFIKGREIQ) lines the ATP pocket. The Mg(2+) site is built by aspartate 256, glutamate 269, and asparagine 271.

The protein belongs to the D-alanine--D-alanine ligase family. Mg(2+) is required as a cofactor. Requires Mn(2+) as cofactor.

The protein localises to the cytoplasm. It carries out the reaction 2 D-alanine + ATP = D-alanyl-D-alanine + ADP + phosphate + H(+). It functions in the pathway cell wall biogenesis; peptidoglycan biosynthesis. Cell wall formation. This Geobacter sulfurreducens (strain ATCC 51573 / DSM 12127 / PCA) protein is D-alanine--D-alanine ligase.